Reading from the N-terminus, the 399-residue chain is Paraneoplastic antigen-like protein 6A (399 aa).

It belongs to the PNMA family. As to expression, expressed in the brain.

In Homo sapiens (Human), this protein is Paraneoplastic antigen-like protein 6A.